The following is a 199-amino-acid chain: Small ribosomal subunit protein uS2 (199 aa).

It belongs to the universal ribosomal protein uS2 family.

The protein is Small ribosomal subunit protein uS2 (rps2) of Thermoplasma acidophilum (strain ATCC 25905 / DSM 1728 / JCM 9062 / NBRC 15155 / AMRC-C165).